We begin with the raw amino-acid sequence, 461 residues long: Photosystem II CP43 reaction center protein (461 aa).

A propeptide spanning residues 1–2 is cleaved from the precursor; that stretch reads ME. Residue Thr-3 is modified to N-acetylthreonine. A Phosphothreonine modification is found at Thr-3. 5 helical membrane-spanning segments follow: residues 57–81, 122–143, 166–188, 243–263, and 279–300; these read LFEVAHFVPEKPMYEQGLILLPHIA, LIGPETLEESFPFFGYIWKDKN, KAMYFGGVYDTWAAGGGDVRIIS, KPWGWARRAFVWSGEAYLSYS, and WFNNTAYPSEFYGPTGPEASQA. [CaMn4O5] cluster is bound at residue Glu-355. The chain crosses the membrane as a helical span at residues 435 to 459; sequence RARAAAAGFEKGIDRDTEPVLSMKP.

The protein belongs to the PsbB/PsbC family. PsbC subfamily. In terms of assembly, PSII is composed of 1 copy each of membrane proteins PsbA, PsbB, PsbC, PsbD, PsbE, PsbF, PsbH, PsbI, PsbJ, PsbK, PsbL, PsbM, PsbT, PsbX, PsbY, PsbZ, Psb30/Ycf12, at least 3 peripheral proteins of the oxygen-evolving complex and a large number of cofactors. It forms dimeric complexes. It depends on Binds multiple chlorophylls and provides some of the ligands for the Ca-4Mn-5O cluster of the oxygen-evolving complex. It may also provide a ligand for a Cl- that is required for oxygen evolution. PSII binds additional chlorophylls, carotenoids and specific lipids. as a cofactor.

Its subcellular location is the plastid. It is found in the chloroplast thylakoid membrane. Its function is as follows. One of the components of the core complex of photosystem II (PSII). It binds chlorophyll and helps catalyze the primary light-induced photochemical processes of PSII. PSII is a light-driven water:plastoquinone oxidoreductase, using light energy to abstract electrons from H(2)O, generating O(2) and a proton gradient subsequently used for ATP formation. This is Photosystem II CP43 reaction center protein from Oltmannsiellopsis viridis (Marine flagellate).